The following is a 109-amino-acid chain: Large ribosomal subunit protein uL22 (109 aa).

This sequence belongs to the universal ribosomal protein uL22 family. As to quaternary structure, part of the 50S ribosomal subunit.

Its function is as follows. This protein binds specifically to 23S rRNA; its binding is stimulated by other ribosomal proteins, e.g. L4, L17, and L20. It is important during the early stages of 50S assembly. It makes multiple contacts with different domains of the 23S rRNA in the assembled 50S subunit and ribosome. The globular domain of the protein is located near the polypeptide exit tunnel on the outside of the subunit, while an extended beta-hairpin is found that lines the wall of the exit tunnel in the center of the 70S ribosome. In Leptothrix cholodnii (strain ATCC 51168 / LMG 8142 / SP-6) (Leptothrix discophora (strain SP-6)), this protein is Large ribosomal subunit protein uL22.